The following is an 87-amino-acid chain: DNA-directed RNA polymerase subunit omega (87 aa).

Belongs to the RNA polymerase subunit omega family. The RNAP catalytic core consists of 2 alpha, 1 beta, 1 beta' and 1 omega subunit. When a sigma factor is associated with the core the holoenzyme is formed, which can initiate transcription.

The enzyme catalyses RNA(n) + a ribonucleoside 5'-triphosphate = RNA(n+1) + diphosphate. Functionally, promotes RNA polymerase assembly. Latches the N- and C-terminal regions of the beta' subunit thereby facilitating its interaction with the beta and alpha subunits. The polypeptide is DNA-directed RNA polymerase subunit omega (Pseudomonas fluorescens (strain SBW25)).